Consider the following 54-residue polypeptide: Apelin receptor early endogenous ligand (54 aa).

A signal peptide spans 1 to 23; that stretch reads MRFQPLFWVFFIFAMSLLFISEQ.

It belongs to the Elabela/Toddler family. In terms of assembly, interacts with APLNR. As to expression, expressed in the placenta. Expressed in syncytiotrophoblasts of the placenta labyrinth at 10.5 dpc. Expressed in placental chorionic trophoblasts (at protein level). Expressed in a small population of epiblast cells in the distal half of the embryo at 7 dpc. Expressed in newly formed definitive endoderm cells in the proximal half of the embryo, while it is not present in extra-embryonic endoderm at 7.5 dpc. This expression pattern then changes to the ventral aspect of the developing foregut pocket and the entire hindgut pocket at 8.5 dpc, before becoming restricted to the foregut overlying the heart and the posterior-most hindgut. Not detected in endothelial precursor cells of the yolk sac at 8 dpc. Expressed in extraembryonic tissues as well as in the chorion at 8.25 dpc. Expressed in endometrial stroma of the uterus of pregnant mice at 8.5 dpc. Expressed in the developing heart, caudal neural tube and trophobasts at 9 dpc. Expressed in the chorionic plate of the chorioallantoic placenta at 9 dpc. Expressed in the posterior half of the ventral neural tube at 9.25 dpc. Expressed in trophoblast cells at the periphery of the placenta at 9.5 dpc. Expressed in collecting ducts of the kidney of pregnant mice at 10.5 dpc. Expressed in the epicardium of the developing heart at 11.5 dpc. Expressed weakly in the adult heart. Expressed in endothelial cells and fibroblasts and weakly in cardiomyocytes.

Its subcellular location is the secreted. The protein resides in the extracellular space. In terms of biological role, peptide hormone that functions as endogenous ligand for the G-protein-coupled apelin receptor (APLNR/APJ), that plays a role in the regulation of normal cardiovascular function and fluid homeostasis. Functions as a balanced agonist activating both G(i) protein pathway and beta-arrestin pathway of APLNR. Downstream G proteins activation, apelin can inhibit cAMP production and activate key intracellular effectors such as ERKs. On the other hand, APLNR activation induces beta-arrestin recruitment to the membrane leading to desensitization and internalization of the receptor. Required for mesendodermal differentiation, blood vessels formation and heart morphogenesis during early development and for adult cardiovascular homeostasis. Acts as a motogen by promoting mesendodermal cell migration during gastrulation by binding and activating APLNR. Acts as an early embryonic regulator of cellular movement with a role in migration and development of cardiac progenitor cells. May act as a chemoattractant for the activation of angioblast migration toward the embryonic midline, i.e. the position of the future vessel formation, during vasculogenesis. Positively regulates sinus venosus (SV)-derived endothelial cells migration into the developing heart to promote coronary blood vessel sprouting. Plays a role in placental vascular development; promotes placental trophoblast invasion and spiral artery remodeling in the uterus. Involved in the regulation of maternal cardiovascular homeostasis to prevent gestational hypertension and for potent cardioprotective functions during heart failure. Mediates myocardial contractility in an ERK1/2-dependent manner. The sequence is that of Apelin receptor early endogenous ligand from Mus musculus (Mouse).